A 393-amino-acid chain; its full sequence is Formate-dependent phosphoribosylglycinamide formyltransferase (393 aa).

Residues 22 to 23 (EL) and Glu-82 each bind N(1)-(5-phospho-beta-D-ribosyl)glycinamide. Residues Arg-114, Lys-155, 160-165 (SSGKGQ), 195-198 (EGLV), and Glu-203 each bind ATP. The ATP-grasp domain maps to 119 to 308 (RLAAETLQLP…EFALHVRAFL (190 aa)). Glu-267 and Glu-279 together coordinate Mg(2+). Residues Asp-286, Lys-355, and 362–363 (RR) contribute to the N(1)-(5-phospho-beta-D-ribosyl)glycinamide site.

It belongs to the PurK/PurT family. Homodimer.

The enzyme catalyses N(1)-(5-phospho-beta-D-ribosyl)glycinamide + formate + ATP = N(2)-formyl-N(1)-(5-phospho-beta-D-ribosyl)glycinamide + ADP + phosphate + H(+). The protein operates within purine metabolism; IMP biosynthesis via de novo pathway; N(2)-formyl-N(1)-(5-phospho-D-ribosyl)glycinamide from N(1)-(5-phospho-D-ribosyl)glycinamide (formate route): step 1/1. Functionally, involved in the de novo purine biosynthesis. Catalyzes the transfer of formate to 5-phospho-ribosyl-glycinamide (GAR), producing 5-phospho-ribosyl-N-formylglycinamide (FGAR). Formate is provided by PurU via hydrolysis of 10-formyl-tetrahydrofolate. This is Formate-dependent phosphoribosylglycinamide formyltransferase from Yersinia pseudotuberculosis serotype IB (strain PB1/+).